The primary structure comprises 430 residues: Enolase (430 aa).

Gln-163 contacts (2R)-2-phosphoglycerate. Glu-205 functions as the Proton donor in the catalytic mechanism. Mg(2+) contacts are provided by Asp-242, Glu-285, and Asp-312. 4 residues coordinate (2R)-2-phosphoglycerate: Lys-337, Arg-366, Ser-367, and Lys-388. Catalysis depends on Lys-337, which acts as the Proton acceptor.

The protein belongs to the enolase family. Mg(2+) is required as a cofactor.

It localises to the cytoplasm. The protein localises to the secreted. The protein resides in the cell surface. It catalyses the reaction (2R)-2-phosphoglycerate = phosphoenolpyruvate + H2O. It participates in carbohydrate degradation; glycolysis; pyruvate from D-glyceraldehyde 3-phosphate: step 4/5. Its function is as follows. Catalyzes the reversible conversion of 2-phosphoglycerate (2-PG) into phosphoenolpyruvate (PEP). It is essential for the degradation of carbohydrates via glycolysis. The sequence is that of Enolase from Maridesulfovibrio salexigens (strain ATCC 14822 / DSM 2638 / NCIMB 8403 / VKM B-1763) (Desulfovibrio salexigens).